Reading from the N-terminus, the 330-residue chain is MPRAAVVCGLGSYLPEAVLSNDMLAAELDTSDAWISSRTGVRQRHIAGDLGSGDLALRAASAALASAGLERVDAVVLATSTGDFCCPATAPRVAARLGLVGALAFDLSAACTGFVYGLASVGSLISAGLADSALLVGVDTFSHTLDPADRSTRALFGDGAGAVVLRAGDAEEEGALLAFDLGSDGHQFDLLMTPAVSRAERSSGQASNYFRMDGKAVFGQAVTQMSDSVRRVLDRVGWQASDLHHLVPHQANTRILAAVADQLDLPVERVVSNIAEVGNTVAASIPLALAHGLRQGILRDGGNMVLTGFGAGLTWGSVALRWPKIVPTMD.

Catalysis depends on residues cysteine 111 and histidine 249. The segment at 250-254 is ACP-binding; that stretch reads QANTR. Residue asparagine 279 is part of the active site.

The protein belongs to the thiolase-like superfamily. FabH family. Homodimer.

Its subcellular location is the cytoplasm. It carries out the reaction malonyl-[ACP] + acetyl-CoA + H(+) = 3-oxobutanoyl-[ACP] + CO2 + CoA. Its pathway is lipid metabolism; fatty acid biosynthesis. Its function is as follows. Catalyzes the condensation reaction of fatty acid synthesis by the addition to an acyl acceptor of two carbons from malonyl-ACP. Catalyzes the first condensation reaction which initiates fatty acid synthesis and may therefore play a role in governing the total rate of fatty acid production. Possesses both acetoacetyl-ACP synthase and acetyl transacylase activities. Its substrate specificity determines the biosynthesis of branched-chain and/or straight-chain of fatty acids. This chain is Beta-ketoacyl-[acyl-carrier-protein] synthase III, found in Pseudomonas aeruginosa (strain LESB58).